We begin with the raw amino-acid sequence, 295 residues long: UDP-N-acetylenolpyruvoylglucosamine reductase (295 aa).

The FAD-binding PCMH-type domain occupies 23-188 (QVGGPADFLA…ISAKFALKPG (166 aa)). Arginine 167 is a catalytic residue. Serine 217 functions as the Proton donor in the catalytic mechanism. Glutamate 287 is an active-site residue.

The protein belongs to the MurB family. FAD serves as cofactor.

Its subcellular location is the cytoplasm. The catalysed reaction is UDP-N-acetyl-alpha-D-muramate + NADP(+) = UDP-N-acetyl-3-O-(1-carboxyvinyl)-alpha-D-glucosamine + NADPH + H(+). It participates in cell wall biogenesis; peptidoglycan biosynthesis. Cell wall formation. The polypeptide is UDP-N-acetylenolpyruvoylglucosamine reductase (Streptococcus equi subsp. equi (strain 4047)).